Here is a 568-residue protein sequence, read N- to C-terminus: Periplasmic trehalase (568 aa).

An N-terminal signal peptide occupies residues 1–38 (MPHAPARSGDAMSAAAPPCCTSLLGLSLSMFVAPCALA). Substrate is bound by residues arginine 169, 176–177 (WD), asparagine 213, 222–224 (RSQ), 294–296 (RPE), and glycine 327. Active-site proton donor/acceptor residues include aspartate 329 and glutamate 511. Glutamate 526 is a substrate binding site.

Belongs to the glycosyl hydrolase 37 family.

It is found in the periplasm. The enzyme catalyses alpha,alpha-trehalose + H2O = alpha-D-glucose + beta-D-glucose. In terms of biological role, provides the cells with the ability to utilize trehalose at high osmolarity by splitting it into glucose molecules that can subsequently be taken up by the phosphotransferase-mediated uptake system. This chain is Periplasmic trehalase, found in Xanthomonas campestris pv. campestris (strain 8004).